We begin with the raw amino-acid sequence, 320 residues long: tRNA pseudouridine synthase B (320 aa).

Asp41 functions as the Nucleophile in the catalytic mechanism. 2 disordered regions span residues 116 to 136 and 259 to 284; these read PPQV…ARRG and DQCQ…DPSA. Positions 125 to 136 are enriched in basic and acidic residues; sequence QGERAHARARRG. Positions 270–284 are enriched in polar residues; that stretch reads SDQQESAPNQTDPSA.

It belongs to the pseudouridine synthase TruB family. Type 1 subfamily.

The catalysed reaction is uridine(55) in tRNA = pseudouridine(55) in tRNA. Responsible for synthesis of pseudouridine from uracil-55 in the psi GC loop of transfer RNAs. This is tRNA pseudouridine synthase B from Prochlorococcus marinus (strain MIT 9313).